A 292-amino-acid chain; its full sequence is Zinc metalloproteinase nas-3 (292 aa).

An N-terminal signal peptide occupies residues 1 to 16; that stretch reads MYRFIIFFSLLALTAS. A Peptidase M12A domain is found at 56-249; it reads RGIAIHPWQW…RNINTLYKCN (194 aa). 2 disulfides stabilise this stretch: Cys103/Cys248 and Cys128/Cys158. Residue His169 coordinates Zn(2+). Residue Glu170 is part of the active site. Zn(2+) contacts are provided by His173 and His179.

Zn(2+) is required as a cofactor.

It localises to the secreted. Metalloprotease. The protein is Zinc metalloproteinase nas-3 (nas-3) of Caenorhabditis elegans.